The following is a 225-amino-acid chain: Phosphoribosylformylglycinamidine synthase subunit PurQ (225 aa).

The region spanning 4–225 is the Glutamine amidotransferase type-1 domain; that stretch reads RVGVITFPGT…YSVLDSVISA (222 aa). Residue C87 is the Nucleophile of the active site. Active-site residues include H196 and E198.

As to quaternary structure, part of the FGAM synthase complex composed of 1 PurL, 1 PurQ and 2 PurS subunits.

It localises to the cytoplasm. The enzyme catalyses N(2)-formyl-N(1)-(5-phospho-beta-D-ribosyl)glycinamide + L-glutamine + ATP + H2O = 2-formamido-N(1)-(5-O-phospho-beta-D-ribosyl)acetamidine + L-glutamate + ADP + phosphate + H(+). It catalyses the reaction L-glutamine + H2O = L-glutamate + NH4(+). Its pathway is purine metabolism; IMP biosynthesis via de novo pathway; 5-amino-1-(5-phospho-D-ribosyl)imidazole from N(2)-formyl-N(1)-(5-phospho-D-ribosyl)glycinamide: step 1/2. Functionally, part of the phosphoribosylformylglycinamidine synthase complex involved in the purines biosynthetic pathway. Catalyzes the ATP-dependent conversion of formylglycinamide ribonucleotide (FGAR) and glutamine to yield formylglycinamidine ribonucleotide (FGAM) and glutamate. The FGAM synthase complex is composed of three subunits. PurQ produces an ammonia molecule by converting glutamine to glutamate. PurL transfers the ammonia molecule to FGAR to form FGAM in an ATP-dependent manner. PurS interacts with PurQ and PurL and is thought to assist in the transfer of the ammonia molecule from PurQ to PurL. The protein is Phosphoribosylformylglycinamidine synthase subunit PurQ of Rhodococcus jostii (strain RHA1).